A 90-amino-acid chain; its full sequence is UPF0237 protein NMA1909 (90 aa).

Residues 5–83 (VITVIGKDRV…LDIRMQNEEI (79 aa)) enclose the ACT domain.

The protein belongs to the UPF0237 family.

The polypeptide is UPF0237 protein NMA1909 (Neisseria meningitidis serogroup A / serotype 4A (strain DSM 15465 / Z2491)).